A 162-amino-acid polypeptide reads, in one-letter code: SsrA-binding protein (162 aa).

It belongs to the SmpB family.

Its subcellular location is the cytoplasm. Functionally, required for rescue of stalled ribosomes mediated by trans-translation. Binds to transfer-messenger RNA (tmRNA), required for stable association of tmRNA with ribosomes. tmRNA and SmpB together mimic tRNA shape, replacing the anticodon stem-loop with SmpB. tmRNA is encoded by the ssrA gene; the 2 termini fold to resemble tRNA(Ala) and it encodes a 'tag peptide', a short internal open reading frame. During trans-translation Ala-aminoacylated tmRNA acts like a tRNA, entering the A-site of stalled ribosomes, displacing the stalled mRNA. The ribosome then switches to translate the ORF on the tmRNA; the nascent peptide is terminated with the 'tag peptide' encoded by the tmRNA and targeted for degradation. The ribosome is freed to recommence translation, which seems to be the essential function of trans-translation. The polypeptide is SsrA-binding protein (Shewanella frigidimarina (strain NCIMB 400)).